A 371-amino-acid polypeptide reads, in one-letter code: tRNA-specific 2-thiouridylase MnmA (371 aa).

ATP-binding positions include 13-20 (GMSGGVDS) and methionine 39. The tract at residues 99 to 101 (NPD) is interaction with target base in tRNA. The active-site Nucleophile is cysteine 104. The cysteines at positions 104 and 200 are disulfide-linked. Glycine 128 provides a ligand contact to ATP. The segment at 150–152 (KDQ) is interaction with tRNA. The active-site Cysteine persulfide intermediate is the cysteine 200. An interaction with tRNA region spans residues 308–309 (RY).

Belongs to the MnmA/TRMU family.

It is found in the cytoplasm. It catalyses the reaction S-sulfanyl-L-cysteinyl-[protein] + uridine(34) in tRNA + AH2 + ATP = 2-thiouridine(34) in tRNA + L-cysteinyl-[protein] + A + AMP + diphosphate + H(+). Functionally, catalyzes the 2-thiolation of uridine at the wobble position (U34) of tRNA, leading to the formation of s(2)U34. This Listeria welshimeri serovar 6b (strain ATCC 35897 / DSM 20650 / CCUG 15529 / CIP 8149 / NCTC 11857 / SLCC 5334 / V8) protein is tRNA-specific 2-thiouridylase MnmA.